A 258-amino-acid chain; its full sequence is Isoprenyl transferase (258 aa).

Residue aspartate 38 is part of the active site. Aspartate 38 lines the Mg(2+) pocket. Substrate contacts are provided by residues 39–42, tryptophan 43, arginine 51, histidine 55, and 83–85; these read GNGR and STE. Asparagine 86 acts as the Proton acceptor in catalysis. Substrate contacts are provided by residues tryptophan 87, arginine 89, arginine 206, and 212 to 214; that span reads RIS. Residue glutamate 225 coordinates Mg(2+).

It belongs to the UPP synthase family. Homodimer. Mg(2+) serves as cofactor.

Its function is as follows. Catalyzes the condensation of isopentenyl diphosphate (IPP) with allylic pyrophosphates generating different type of terpenoids. The polypeptide is Isoprenyl transferase (Bacillus anthracis).